Here is a 1368-residue protein sequence, read N- to C-terminus: DNA-directed RNA polymerase subunit beta (1368 aa).

The protein belongs to the RNA polymerase beta chain family. The RNAP catalytic core consists of 2 alpha, 1 beta, 1 beta' and 1 omega subunit. When a sigma factor is associated with the core the holoenzyme is formed, which can initiate transcription.

The catalysed reaction is RNA(n) + a ribonucleoside 5'-triphosphate = RNA(n+1) + diphosphate. Functionally, DNA-dependent RNA polymerase catalyzes the transcription of DNA into RNA using the four ribonucleoside triphosphates as substrates. The sequence is that of DNA-directed RNA polymerase subunit beta from Ralstonia nicotianae (strain ATCC BAA-1114 / GMI1000) (Ralstonia solanacearum).